The sequence spans 113 residues: uncharacterized protein (113 aa).

The disordered stretch occupies residues 31–113 (SNNNNNNNNN…YSPTKFNLQY (83 aa)). Low complexity predominate over residues 32–98 (NNNNNNNNNN…NNNNNNNNNN (67 aa)). Residues 99–113 (SSSFEYSPTKFNLQY) are compositionally biased toward polar residues.

This is an uncharacterized protein from Dictyostelium discoideum (Social amoeba).